A 252-amino-acid polypeptide reads, in one-letter code: Trans-aconitate 2-methyltransferase (252 aa).

The protein belongs to the methyltransferase superfamily. Tam family.

The protein localises to the cytoplasm. It catalyses the reaction trans-aconitate + S-adenosyl-L-methionine = (E)-3-(methoxycarbonyl)pent-2-enedioate + S-adenosyl-L-homocysteine. Functionally, catalyzes the S-adenosylmethionine monomethyl esterification of trans-aconitate. This Escherichia coli O6:K15:H31 (strain 536 / UPEC) protein is Trans-aconitate 2-methyltransferase.